Here is a 536-residue protein sequence, read N- to C-terminus: Probable cytochrome P450 12a5, mitochondrial (536 aa).

Cysteine 482 lines the heme pocket.

The protein belongs to the cytochrome P450 family. It depends on heme as a cofactor.

It is found in the mitochondrion membrane. The chain is Probable cytochrome P450 12a5, mitochondrial (Cyp12a5) from Drosophila melanogaster (Fruit fly).